The sequence spans 297 residues: Protein-methionine-sulfoxide reductase catalytic subunit MsrP (297 aa).

A signal peptide (tat-type signal) is located at residues 1–35; it reads MLITPEKLYKQRRNFLKLGAGALISSSVLASKLSA. Mo-molybdopterin contacts are provided by residues 62 to 63, Cys116, Thr151, Asn201, Arg206, and 217 to 219; these read YE and SIK.

It belongs to the MsrP family. As to quaternary structure, heterodimer of a catalytic subunit (MsrP) and a heme-binding subunit (MsrQ). The cofactor is Mo-molybdopterin. Predicted to be exported by the Tat system. The position of the signal peptide cleavage has not been experimentally proven.

Its subcellular location is the periplasm. The enzyme catalyses L-methionyl-[protein] + a quinone + H2O = L-methionyl-(S)-S-oxide-[protein] + a quinol. The catalysed reaction is L-methionyl-[protein] + a quinone + H2O = L-methionyl-(R)-S-oxide-[protein] + a quinol. Functionally, part of the MsrPQ system that repairs oxidized periplasmic proteins containing methionine sulfoxide residues (Met-O), using respiratory chain electrons. Thus protects these proteins from oxidative-stress damage caused by reactive species of oxygen and chlorine generated by the host defense mechanisms. MsrPQ is essential for the maintenance of envelope integrity under bleach stress, rescuing a wide series of structurally unrelated periplasmic proteins from methionine oxidation. The catalytic subunit MsrP is non-stereospecific, being able to reduce both (R-) and (S-) diastereoisomers of methionine sulfoxide. This Campylobacter jejuni subsp. jejuni serotype O:2 (strain ATCC 700819 / NCTC 11168) protein is Protein-methionine-sulfoxide reductase catalytic subunit MsrP.